We begin with the raw amino-acid sequence, 107 residues long: Thiosulfate sulfurtransferase GlpE (107 aa).

The Rhodanese domain maps to 19–107 (QDLNAVLVDI…WHKAGLPVEK (89 aa)). Cysteine 67 functions as the Cysteine persulfide intermediate in the catalytic mechanism.

The protein belongs to the GlpE family.

The protein localises to the cytoplasm. It carries out the reaction thiosulfate + hydrogen cyanide = thiocyanate + sulfite + 2 H(+). It catalyses the reaction thiosulfate + [thioredoxin]-dithiol = [thioredoxin]-disulfide + hydrogen sulfide + sulfite + 2 H(+). Its function is as follows. Transferase that catalyzes the transfer of sulfur from thiosulfate to thiophilic acceptors such as cyanide or dithiols. May function in a CysM-independent thiosulfate assimilation pathway by catalyzing the conversion of thiosulfate to sulfite, which can then be used for L-cysteine biosynthesis. The chain is Thiosulfate sulfurtransferase GlpE from Aliivibrio fischeri (strain ATCC 700601 / ES114) (Vibrio fischeri).